The primary structure comprises 153 residues: Cell division protein SepF (153 aa).

The protein belongs to the SepF family. As to quaternary structure, homodimer. Interacts with FtsZ.

The protein resides in the cytoplasm. Cell division protein that is part of the divisome complex and is recruited early to the Z-ring. Probably stimulates Z-ring formation, perhaps through the cross-linking of FtsZ protofilaments. Its function overlaps with FtsA. The protein is Cell division protein SepF of Clostridium tetani (strain Massachusetts / E88).